Reading from the N-terminus, the 668-residue chain is tRNA 5-methylaminomethyl-2-thiouridine biosynthesis bifunctional protein MnmC (668 aa).

The tract at residues M1 to E245 is tRNA (mnm(5)s(2)U34)-methyltransferase. The FAD-dependent cmnm(5)s(2)U34 oxidoreductase stretch occupies residues I270–G668.

The protein in the N-terminal section; belongs to the methyltransferase superfamily. tRNA (mnm(5)s(2)U34)-methyltransferase family. In the C-terminal section; belongs to the DAO family. Requires FAD as cofactor.

The protein resides in the cytoplasm. It carries out the reaction 5-aminomethyl-2-thiouridine(34) in tRNA + S-adenosyl-L-methionine = 5-methylaminomethyl-2-thiouridine(34) in tRNA + S-adenosyl-L-homocysteine + H(+). In terms of biological role, catalyzes the last two steps in the biosynthesis of 5-methylaminomethyl-2-thiouridine (mnm(5)s(2)U) at the wobble position (U34) in tRNA. Catalyzes the FAD-dependent demodification of cmnm(5)s(2)U34 to nm(5)s(2)U34, followed by the transfer of a methyl group from S-adenosyl-L-methionine to nm(5)s(2)U34, to form mnm(5)s(2)U34. This is tRNA 5-methylaminomethyl-2-thiouridine biosynthesis bifunctional protein MnmC from Shigella dysenteriae serotype 1 (strain Sd197).